The following is a 152-amino-acid chain: Ribosome maturation factor RimP (152 aa).

This sequence belongs to the RimP family.

Its subcellular location is the cytoplasm. In terms of biological role, required for maturation of 30S ribosomal subunits. The polypeptide is Ribosome maturation factor RimP (Aeromonas salmonicida (strain A449)).